The chain runs to 186 residues: Protein Syd (186 aa).

This sequence belongs to the Syd family.

It is found in the cell inner membrane. In terms of biological role, interacts with the SecY protein in vivo. May bind preferentially to an uncomplexed state of SecY, thus functioning either as a chelating agent for excess SecY in the cell or as a regulatory factor that negatively controls the translocase function. This is Protein Syd from Pseudoalteromonas atlantica (strain T6c / ATCC BAA-1087).